Here is a 206-residue protein sequence, read N- to C-terminus: Probable N-acetyltransferase 14 (206 aa).

The 152-residue stretch at 55–206 (LRFVLASFAL…TLVREFSKEL (152 aa)) folds into the N-acetyltransferase domain. The helical transmembrane segment at 57 to 77 (FVLASFALALLLPVFLAVAAM) threads the bilayer.

This sequence belongs to the camello family.

Its subcellular location is the membrane. Its function is as follows. Probable acetyltransferase. In terms of biological role, may act as a transcription factor regulating the expression of coproporphyrinogen oxidase by binding to a promoter regulatory element. This Bos taurus (Bovine) protein is Probable N-acetyltransferase 14.